Reading from the N-terminus, the 513-residue chain is Na(+)/H(+) antiporter NhaB (513 aa).

Helical transmembrane passes span Leu23–Ala43, Ile52–Ile72, Leu97–Phe117, Leu120–Phe140, Phe144–Ile164, Leu202–Pro222, Phe238–Leu258, Ala303–Ile323, Thr348–Ile368, Leu391–Ile411, Ala447–Ile467, and Val475–Phe495.

This sequence belongs to the NhaB Na(+)/H(+) (TC 2.A.34) antiporter family.

It is found in the cell inner membrane. It carries out the reaction 2 Na(+)(in) + 3 H(+)(out) = 2 Na(+)(out) + 3 H(+)(in). Na(+)/H(+) antiporter that extrudes sodium in exchange for external protons. This Escherichia coli O45:K1 (strain S88 / ExPEC) protein is Na(+)/H(+) antiporter NhaB.